The chain runs to 416 residues: Multifunctional CCA protein (416 aa).

ATP contacts are provided by glycine 8 and arginine 11. CTP-binding residues include glycine 8 and arginine 11. Mg(2+) is bound by residues aspartate 21 and aspartate 23. ATP is bound by residues arginine 91, arginine 137, and arginine 140. 3 residues coordinate CTP: arginine 91, arginine 137, and arginine 140. In terms of domain architecture, HD spans 228 to 329 (TGVHTLMVLA…VKIFDKADFW (102 aa)).

Belongs to the tRNA nucleotidyltransferase/poly(A) polymerase family. Bacterial CCA-adding enzyme type 1 subfamily. Monomer. Can also form homodimers and oligomers. Requires Mg(2+) as cofactor. It depends on Ni(2+) as a cofactor.

The catalysed reaction is a tRNA precursor + 2 CTP + ATP = a tRNA with a 3' CCA end + 3 diphosphate. It carries out the reaction a tRNA with a 3' CCA end + 2 CTP + ATP = a tRNA with a 3' CCACCA end + 3 diphosphate. In terms of biological role, catalyzes the addition and repair of the essential 3'-terminal CCA sequence in tRNAs without using a nucleic acid template. Adds these three nucleotides in the order of C, C, and A to the tRNA nucleotide-73, using CTP and ATP as substrates and producing inorganic pyrophosphate. tRNA 3'-terminal CCA addition is required both for tRNA processing and repair. Also involved in tRNA surveillance by mediating tandem CCA addition to generate a CCACCA at the 3' terminus of unstable tRNAs. While stable tRNAs receive only 3'-terminal CCA, unstable tRNAs are marked with CCACCA and rapidly degraded. In Shewanella baltica (strain OS195), this protein is Multifunctional CCA protein.